The following is an 86-amino-acid chain: RNA-binding protein Hfq (86 aa).

The region spanning 9–68 is the Sm domain; sequence DPYLNVLRKERIPVSIYLVNGIKLQGQVESFDQFVVLLKNTVSQMVYKHAISTVVPSRPV.

It belongs to the Hfq family. Homohexamer.

In terms of biological role, RNA chaperone that binds small regulatory RNA (sRNAs) and mRNAs to facilitate mRNA translational regulation in response to envelope stress, environmental stress and changes in metabolite concentrations. Also binds with high specificity to tRNAs. In Saccharophagus degradans (strain 2-40 / ATCC 43961 / DSM 17024), this protein is RNA-binding protein Hfq.